Consider the following 3658-residue polypeptide: Serine/threonine-protein kinase SMG1 (3658 aa).

Disordered stretches follow at residues 1 to 99 (MSRR…TYGR) and 116 to 142 (FTSV…MSYS). A compositionally biased stretch (polar residues) spans 24-33 (NDWQPRTDSA). 2 stretches are compositionally biased toward basic and acidic residues: residues 67-84 (QRHD…DEKG) and 127-136 (ATKDMRKSQE). Position 171 is an N6-acetyllysine (Lys171). The 584-residue stretch at 1281–1864 (RELQKSIEVQ…LYPAIVGTIS (584 aa)) folds into the FAT domain. Residues 1815 to 1850 (APWRGIIPQLFSRLNHPEVYVRQSICNLLCRVAQDS) form an HEAT repeat. Residues 1896–1917 (ECEGGSPPASQDSNKDEPKSGL) form a disordered region. The PI3K/PI4K catalytic domain maps to 2122–2461 (VGGTITILPT…MEREITRSLF (340 aa)). The interval 2128–2134 (ILPTKTK) is G-loop. Residues 2330–2338 (GLGDRHLDN) are catalytic loop. Positions 2350–2374 (HIDYNVCFEKGKSLRVPEKVPFRMT) are activation loop. Thr3547 is subject to Phosphothreonine. Phosphoserine is present on residues Ser3553 and Ser3567. Positions 3565–3576 (ATSADTPPSTIP) are enriched in polar residues. The interval 3565–3588 (ATSADTPPSTIPGTGKSIACSPKK) is disordered. Residues Thr3570 and Thr3574 each carry the phosphothreonine modification. Residues 3626–3658 (RRMSVAEQVDYVIKEATNLDNLAQLYEGWTAWV) form the FATC domain.

It belongs to the PI3/PI4-kinase family. In terms of assembly, component of the SMG1C complex composed of SMG1, SMG8 and SMG9; the recruitment of SMG8 to SMG1 N-terminus induces a large conformational change in the SMG1 C-terminal head domain containing the catalytic domain. Component of the transient SURF (SMG1-UPF1-eRF1-eRF3) complex. Part of a complex composed of SMG1, DHX34 and UPF1; within the complex DHX34 acts as a scaffolding protein to facilitate SMG1 phosphorylation of UPF1. Interacts with PRKCI. Interacts with TELO2 and TTI1. Interacts with RUVBL1 and RUVBL2. Interacts with DHX34 (via C-terminus); the interaction is RNA-independent. Requires Mn(2+) as cofactor. Post-translationally, autophosphorylated.

Its subcellular location is the nucleus. It is found in the cytoplasm. The enzyme catalyses L-seryl-[protein] + ATP = O-phospho-L-seryl-[protein] + ADP + H(+). The catalysed reaction is L-threonyl-[protein] + ATP = O-phospho-L-threonyl-[protein] + ADP + H(+). Inhibited by caffeine, LY294002 and wortmannin. Functionally, serine/threonine protein kinase involved in both mRNA surveillance and genotoxic stress response pathways. Recognizes the substrate consensus sequence [ST]-Q. Plays a central role in nonsense-mediated decay (NMD) of mRNAs containing premature stop codons by phosphorylating UPF1/RENT1. Recruited by release factors to stalled ribosomes together with SMG8 and SMG9 (forming the SMG1C protein kinase complex), and UPF1 to form the transient SURF (SMG1-UPF1-eRF1-eRF3) complex. In EJC-dependent NMD, the SURF complex associates with the exon junction complex (EJC) through UPF2 and allows the formation of an UPF1-UPF2-UPF3 surveillance complex which is believed to activate NMD. Also acts as a genotoxic stress-activated protein kinase that displays some functional overlap with ATM. Can phosphorylate p53/TP53 and is required for optimal p53/TP53 activation after cellular exposure to genotoxic stress. Its depletion leads to spontaneous DNA damage and increased sensitivity to ionizing radiation (IR). May activate PRKCI but not PRKCZ. In Mus musculus (Mouse), this protein is Serine/threonine-protein kinase SMG1.